The sequence spans 407 residues: Phosphopentomutase (407 aa).

The Mn(2+) site is built by Asp10, Asp306, His311, Asp347, His348, and His359.

The protein belongs to the phosphopentomutase family. It depends on Mn(2+) as a cofactor.

It is found in the cytoplasm. It carries out the reaction 2-deoxy-alpha-D-ribose 1-phosphate = 2-deoxy-D-ribose 5-phosphate. It catalyses the reaction alpha-D-ribose 1-phosphate = D-ribose 5-phosphate. It functions in the pathway carbohydrate degradation; 2-deoxy-D-ribose 1-phosphate degradation; D-glyceraldehyde 3-phosphate and acetaldehyde from 2-deoxy-alpha-D-ribose 1-phosphate: step 1/2. Functionally, isomerase that catalyzes the conversion of deoxy-ribose 1-phosphate (dRib-1-P) and ribose 1-phosphate (Rib-1-P) to deoxy-ribose 5-phosphate (dRib-5-P) and ribose 5-phosphate (Rib-5-P), respectively. The chain is Phosphopentomutase from Pectobacterium carotovorum subsp. carotovorum (strain PC1).